We begin with the raw amino-acid sequence, 469 residues long: Glutamine synthetase (469 aa).

Positions 13 to 97 (HEVKFVDLRF…IRCDILEPGT (85 aa)) constitute a GS beta-grasp domain. Residues 105–469 (PRSIAKRAED…PVEFELYYSV (365 aa)) enclose the GS catalytic domain. Mg(2+)-binding residues include Glu-130 and Glu-132. Residue Glu-208 participates in ATP binding. Glu-213 and Glu-221 together coordinate Mg(2+). L-glutamate is bound by residues 265-266 (NG) and Gly-266. His-270 lines the Mg(2+) pocket. ATP is bound by residues 272 to 274 (HMS) and Ser-274. Residues Arg-322, Glu-328, and Arg-340 each coordinate L-glutamate. ATP is bound by residues Arg-340, Arg-345, and Lys-353. Glu-358 is a Mg(2+) binding site. Residue Arg-360 participates in L-glutamate binding. Position 398 is an O-AMP-tyrosine (Tyr-398).

The protein belongs to the glutamine synthetase family. As to quaternary structure, oligomer of 12 subunits arranged in the form of two hexagons. Mn(2+) serves as cofactor.

It is found in the cytoplasm. The enzyme catalyses L-glutamate + NH4(+) + ATP = L-glutamine + ADP + phosphate + H(+). Its activity is regulated as follows. When cellular nitrogen levels are high, the C-terminal adenylyl transferase (AT) of GlnE inhibits GlnA by covalent transfer of an adenylyl group from ATP to Tyr-398. Conversely, when nitrogen levels are low, the N-terminal adenylyl removase (AR) of GlnE activates GlnA by removing the adenylyl group by phosphorolysis. The fully adenylated enzyme complex is inactive. Functionally, catalyzes the ATP-dependent biosynthesis of glutamine from glutamate and ammonia. The protein is Glutamine synthetase of Salmonella typhi.